The chain runs to 457 residues: MSKRYAVVLAAGQGTRMKSKLYKVLHPVCGKPMVEHVVDQISTLNVDKVVTIVGHGAEKVQEHLAGKSEFVKQDEQLGTAHAVLQAKAELAGKDGVTLVVCGDTPLIEASTMEALLKYHHEKRAKATILTTVIEDPTGYGRIIRDDLGIVEKIVEHKDATEKEQRISEINTGTYCFDNKALFEALENVSNDNVQGEYYLPDVIKILKDSDEVVAAYRMESFEESLGVNDRIALAEASKLMQRRINENHMRNGVTLVNPESTYIDIDVKIGQDTVIEPGVMLRGKTVIGDDCVVTSGSEIVNSVIGERVHVRTSSIFESKVGDDVQIGPYAHLRPESDIHDHVKIGNYVETKKAVVGEGTKLPHFIYMGDAEIGKNVNVGCGSIAVNYDGKNKAKTIIGDNVFVGCNSNLIAPVKVGDRAFIAAGSTITKDVPEDALGIARAKQDNKLGYAKHLNHSK.

The tract at residues 1-230 is pyrophosphorylase; it reads MSKRYAVVLA…FEESLGVNDR (230 aa). UDP-N-acetyl-alpha-D-glucosamine is bound by residues 9-12, K23, Q73, and 78-79; these read LAAG and GT. D103 lines the Mg(2+) pocket. Positions 140, 155, 170, and 228 each coordinate UDP-N-acetyl-alpha-D-glucosamine. Residue N228 coordinates Mg(2+). The interval 231-251 is linker; it reads IALAEASKLMQRRINENHMRN. Residues 252–457 form an N-acetyltransferase region; sequence GVTLVNPEST…GYAKHLNHSK (206 aa). UDP-N-acetyl-alpha-D-glucosamine contacts are provided by R333 and K351. Catalysis depends on H363, which acts as the Proton acceptor. Residues Y366 and N377 each contribute to the UDP-N-acetyl-alpha-D-glucosamine site. Residues 386-387, A423, and R440 each bind acetyl-CoA; that span reads NY.

The protein in the N-terminal section; belongs to the N-acetylglucosamine-1-phosphate uridyltransferase family. In the C-terminal section; belongs to the transferase hexapeptide repeat family. In terms of assembly, homotrimer. It depends on Mg(2+) as a cofactor.

It is found in the cytoplasm. It catalyses the reaction alpha-D-glucosamine 1-phosphate + acetyl-CoA = N-acetyl-alpha-D-glucosamine 1-phosphate + CoA + H(+). The catalysed reaction is N-acetyl-alpha-D-glucosamine 1-phosphate + UTP + H(+) = UDP-N-acetyl-alpha-D-glucosamine + diphosphate. The protein operates within nucleotide-sugar biosynthesis; UDP-N-acetyl-alpha-D-glucosamine biosynthesis; N-acetyl-alpha-D-glucosamine 1-phosphate from alpha-D-glucosamine 6-phosphate (route II): step 2/2. It functions in the pathway nucleotide-sugar biosynthesis; UDP-N-acetyl-alpha-D-glucosamine biosynthesis; UDP-N-acetyl-alpha-D-glucosamine from N-acetyl-alpha-D-glucosamine 1-phosphate: step 1/1. It participates in bacterial outer membrane biogenesis; LPS lipid A biosynthesis. Its function is as follows. Catalyzes the last two sequential reactions in the de novo biosynthetic pathway for UDP-N-acetylglucosamine (UDP-GlcNAc). The C-terminal domain catalyzes the transfer of acetyl group from acetyl coenzyme A to glucosamine-1-phosphate (GlcN-1-P) to produce N-acetylglucosamine-1-phosphate (GlcNAc-1-P), which is converted into UDP-GlcNAc by the transfer of uridine 5-monophosphate (from uridine 5-triphosphate), a reaction catalyzed by the N-terminal domain. This is Bifunctional protein GlmU from Listeria monocytogenes serovar 1/2a (strain ATCC BAA-679 / EGD-e).